A 210-amino-acid polypeptide reads, in one-letter code: Glutathione S-transferase P (210 aa).

Positions 2 to 81 (ASYTIVYFPV…HLGRTLGLYG (80 aa)) constitute a GST N-terminal domain. Phosphotyrosine; by EGFR is present on Tyr-4. Glutathione contacts are provided by residues Tyr-8, Arg-14, Trp-39, Lys-45, and 52-53 (QL). Position 62 is a phosphothreonine (Thr-62). Glutathione is bound at residue 65-66 (QS). The GST C-terminal domain maps to 83–204 (DQREAALVDM…ASPEHVNRPI (122 aa)). N6-succinyllysine is present on residues Lys-103 and Lys-116. Lys-128 carries the N6-acetyllysine modification.

This sequence belongs to the GST superfamily. Pi family. As to quaternary structure, homodimer. Interacts with CDK5.

It is found in the cytoplasm. It localises to the mitochondrion. The protein localises to the nucleus. The catalysed reaction is RX + glutathione = an S-substituted glutathione + a halide anion + H(+). It catalyses the reaction prostaglandin J2 + glutathione = prostaglandin J2-S-(R)-glutathione. The enzyme catalyses prostaglandin J2 + glutathione = prostaglandin J2-S-(S)-glutathione. It carries out the reaction prostaglandin A2 + glutathione = prostaglandin A2-S-(S)-glutathione. The catalysed reaction is 11(S)-hydroxy-14(S),15(S)-epoxy-(5Z,8Z,12E)-eicosatrienoate + glutathione = (11S,15S)-dihydroxy-14(R)-S-glutathionyl-(5Z,8Z,12E)-eicosatrienoate. Conjugation of reduced glutathione to a wide number of exogenous and endogenous hydrophobic electrophiles. Involved in the formation of glutathione conjugates of both prostaglandin A2 (PGA2) and prostaglandin J2 (PGJ2). Participates in the formation of novel hepoxilin regioisomers. Negatively regulates CDK5 activity via p25/p35 translocation to prevent neurodegeneration. This Capra hircus (Goat) protein is Glutathione S-transferase P (GSTP1).